A 337-amino-acid chain; its full sequence is Anthranilate phosphoribosyltransferase (337 aa).

5-phospho-alpha-D-ribose 1-diphosphate is bound by residues G78, 81–82, T86, 88–91, 106–114, and S118; these read GD, NIST, and KHGNRSVSS. G78 is a binding site for anthranilate. S90 lines the Mg(2+) pocket. N109 serves as a coordination point for anthranilate. R164 contributes to the anthranilate binding site. Residues D222 and E223 each coordinate Mg(2+).

This sequence belongs to the anthranilate phosphoribosyltransferase family. As to quaternary structure, homodimer. Mg(2+) is required as a cofactor.

It catalyses the reaction N-(5-phospho-beta-D-ribosyl)anthranilate + diphosphate = 5-phospho-alpha-D-ribose 1-diphosphate + anthranilate. Its pathway is amino-acid biosynthesis; L-tryptophan biosynthesis; L-tryptophan from chorismate: step 2/5. In terms of biological role, catalyzes the transfer of the phosphoribosyl group of 5-phosphorylribose-1-pyrophosphate (PRPP) to anthranilate to yield N-(5'-phosphoribosyl)-anthranilate (PRA). The chain is Anthranilate phosphoribosyltransferase from Idiomarina loihiensis (strain ATCC BAA-735 / DSM 15497 / L2-TR).